We begin with the raw amino-acid sequence, 427 residues long: Glutamate-1-semialdehyde 2,1-aminomutase (427 aa).

K265 carries the post-translational modification N6-(pyridoxal phosphate)lysine.

Belongs to the class-III pyridoxal-phosphate-dependent aminotransferase family. HemL subfamily. Homodimer. Requires pyridoxal 5'-phosphate as cofactor.

It is found in the cytoplasm. The catalysed reaction is (S)-4-amino-5-oxopentanoate = 5-aminolevulinate. It participates in porphyrin-containing compound metabolism; protoporphyrin-IX biosynthesis; 5-aminolevulinate from L-glutamyl-tRNA(Glu): step 2/2. The sequence is that of Glutamate-1-semialdehyde 2,1-aminomutase from Edwardsiella ictaluri (strain 93-146).